The chain runs to 393 residues: tRNA(Met) cytidine acetate ligase (393 aa).

ATP contacts are provided by Gly81, Asn142, and Arg167.

Belongs to the TmcAL family.

It is found in the cytoplasm. It catalyses the reaction cytidine(34) in elongator tRNA(Met) + acetate + ATP = N(4)-acetylcytidine(34) in elongator tRNA(Met) + AMP + diphosphate. Its function is as follows. Catalyzes the formation of N(4)-acetylcytidine (ac(4)C) at the wobble position of elongator tRNA(Met), using acetate and ATP as substrates. First activates an acetate ion to form acetyladenylate (Ac-AMP) and then transfers the acetyl group to tRNA to form ac(4)C34. The protein is tRNA(Met) cytidine acetate ligase of Bacillus cereus (strain AH820).